The primary structure comprises 1040 residues: Multidrug resistance protein MdtB (1040 aa).

The next 12 membrane-spanning stretches (helical) occupy residues F16 to I36, D342 to L362, I369 to L389, L396 to I416, I440 to F460, F472 to P492, W537 to I557, L863 to V883, F888 to A908, L911 to V931, I968 to V988, and I998 to I1018.

It belongs to the resistance-nodulation-cell division (RND) (TC 2.A.6) family. MdtB subfamily. As to quaternary structure, part of a tripartite efflux system composed of MdtA, MdtB and MdtC. MdtB forms a heteromultimer with MdtC.

It is found in the cell inner membrane. The protein is Multidrug resistance protein MdtB of Klebsiella pneumoniae (strain 342).